Consider the following 99-residue polypeptide: Large ribosomal subunit protein uL23 (99 aa).

Belongs to the universal ribosomal protein uL23 family. In terms of assembly, part of the 50S ribosomal subunit. Contacts protein L29, and trigger factor when it is bound to the ribosome.

In terms of biological role, one of the early assembly proteins it binds 23S rRNA. One of the proteins that surrounds the polypeptide exit tunnel on the outside of the ribosome. Forms the main docking site for trigger factor binding to the ribosome. The polypeptide is Large ribosomal subunit protein uL23 (Alkalilimnicola ehrlichii (strain ATCC BAA-1101 / DSM 17681 / MLHE-1)).